The sequence spans 460 residues: Bifunctional protein GlmU (460 aa).

The tract at residues 1-229 (MTNYAIILAA…FNESLGVNDR (229 aa)) is pyrophosphorylase. UDP-N-acetyl-alpha-D-glucosamine contacts are provided by residues 8 to 11 (LAAG), K22, Q72, and 77 to 78 (GT). Mg(2+) is bound at residue D102. UDP-N-acetyl-alpha-D-glucosamine is bound by residues G139, E154, N169, and N227. Residue N227 participates in Mg(2+) binding. Residues 230-250 (VALATAETVMRQRITQKHMVN) form a linker region. The tract at residues 251–460 (GVTFQNPETV…RLAHHPSRSK (210 aa)) is N-acetyltransferase. UDP-N-acetyl-alpha-D-glucosamine is bound by residues R332 and K350. H362 (proton acceptor) is an active-site residue. Y365 and N376 together coordinate UDP-N-acetyl-alpha-D-glucosamine. Acetyl-CoA contacts are provided by residues A379, 385 to 386 (NY), S404, A422, and R439.

In the N-terminal section; belongs to the N-acetylglucosamine-1-phosphate uridyltransferase family. The protein in the C-terminal section; belongs to the transferase hexapeptide repeat family. Homotrimer. Mg(2+) is required as a cofactor.

It is found in the cytoplasm. It catalyses the reaction alpha-D-glucosamine 1-phosphate + acetyl-CoA = N-acetyl-alpha-D-glucosamine 1-phosphate + CoA + H(+). The catalysed reaction is N-acetyl-alpha-D-glucosamine 1-phosphate + UTP + H(+) = UDP-N-acetyl-alpha-D-glucosamine + diphosphate. Its pathway is nucleotide-sugar biosynthesis; UDP-N-acetyl-alpha-D-glucosamine biosynthesis; N-acetyl-alpha-D-glucosamine 1-phosphate from alpha-D-glucosamine 6-phosphate (route II): step 2/2. The protein operates within nucleotide-sugar biosynthesis; UDP-N-acetyl-alpha-D-glucosamine biosynthesis; UDP-N-acetyl-alpha-D-glucosamine from N-acetyl-alpha-D-glucosamine 1-phosphate: step 1/1. It participates in bacterial outer membrane biogenesis; LPS lipid A biosynthesis. Functionally, catalyzes the last two sequential reactions in the de novo biosynthetic pathway for UDP-N-acetylglucosamine (UDP-GlcNAc). The C-terminal domain catalyzes the transfer of acetyl group from acetyl coenzyme A to glucosamine-1-phosphate (GlcN-1-P) to produce N-acetylglucosamine-1-phosphate (GlcNAc-1-P), which is converted into UDP-GlcNAc by the transfer of uridine 5-monophosphate (from uridine 5-triphosphate), a reaction catalyzed by the N-terminal domain. The chain is Bifunctional protein GlmU from Streptococcus pyogenes serotype M12 (strain MGAS9429).